Consider the following 217-residue polypeptide: Small ribosomal subunit protein uS3 (217 aa).

Residues 38 to 106 (IRKFVQKELA…QVHINIIEIK (69 aa)) form the KH type-2 domain.

It belongs to the universal ribosomal protein uS3 family. As to quaternary structure, part of the 30S ribosomal subunit. Forms a tight complex with proteins S10 and S14.

Its function is as follows. Binds the lower part of the 30S subunit head. Binds mRNA in the 70S ribosome, positioning it for translation. The chain is Small ribosomal subunit protein uS3 from Streptococcus gordonii (strain Challis / ATCC 35105 / BCRC 15272 / CH1 / DL1 / V288).